We begin with the raw amino-acid sequence, 126 residues long: Small ribosomal subunit protein uS12 (126 aa).

The residue at position 89 (D89) is a 3-methylthioaspartic acid. The segment at 99 to 126 is disordered; it reads RGSLDTSGVNDRKQGRSKYGTKKPKDKK. Positions 113-126 are enriched in basic residues; the sequence is GRSKYGTKKPKDKK.

This sequence belongs to the universal ribosomal protein uS12 family. As to quaternary structure, part of the 30S ribosomal subunit. Contacts proteins S8 and S17. May interact with IF1 in the 30S initiation complex.

In terms of biological role, with S4 and S5 plays an important role in translational accuracy. Functionally, interacts with and stabilizes bases of the 16S rRNA that are involved in tRNA selection in the A site and with the mRNA backbone. Located at the interface of the 30S and 50S subunits, it traverses the body of the 30S subunit contacting proteins on the other side and probably holding the rRNA structure together. The combined cluster of proteins S8, S12 and S17 appears to hold together the shoulder and platform of the 30S subunit. The chain is Small ribosomal subunit protein uS12 from Legionella pneumophila (strain Paris).